Consider the following 118-residue polypeptide: MGKLSTHVLDTAHGTPAAAMRVELYRIAASGTPELLKRVVTNLDGRTDAPLLSGDKMRTGIYELQFHVAEYFEGRGAELAHEPFLDLIPIRFGIADEDGNYHVPLLVSPWSYSTYRGS.

Positions 7, 46, and 115 each coordinate substrate.

Belongs to the transthyretin family. 5-hydroxyisourate hydrolase subfamily. Homotetramer.

It catalyses the reaction 5-hydroxyisourate + H2O = 5-hydroxy-2-oxo-4-ureido-2,5-dihydro-1H-imidazole-5-carboxylate + H(+). Functionally, catalyzes the hydrolysis of 5-hydroxyisourate (HIU) to 2-oxo-4-hydroxy-4-carboxy-5-ureidoimidazoline (OHCU). In Brucella suis biovar 1 (strain 1330), this protein is 5-hydroxyisourate hydrolase.